Reading from the N-terminus, the 640-residue chain is Lysophospholipase (640 aa).

An N-terminal signal peptide occupies residues 1–25 (MWFLNSVNLLFLVCSVALHLDAVNA). The 552-residue stretch at 38–589 (DCDENINLVR…EKYCWNGTVD (552 aa)) folds into the PLA2c domain. N-linked (GlcNAc...) asparagine glycosylation is found at asparagine 84, asparagine 126, asparagine 163, asparagine 173, asparagine 218, asparagine 280, asparagine 310, asparagine 317, asparagine 348, asparagine 391, asparagine 492, asparagine 516, asparagine 544, asparagine 568, and asparagine 585. The segment covering 594 to 610 (ISSTTSSSASSTSTSDS) has biased composition (low complexity). The interval 594 to 616 (ISSTTSSSASSTSTSDSGNKENS) is disordered.

The protein belongs to the lysophospholipase family. Highly glycosylated.

It is found in the secreted. It carries out the reaction a 1-acyl-sn-glycero-3-phosphocholine + H2O = sn-glycerol 3-phosphocholine + a fatty acid + H(+). Functionally, catalyzes the release of fatty acids from lysophospholipids. At acidic pH the enzyme hydrolyzes all phospholipid substrates without metal ion. On the other hand, at alkaline pH the enzyme shows substrate specificity for phosphatidylcholine and lysophosphatidylcholine and requires Ca(2+), Fe(3+), or Al(3+) for the activity. The polypeptide is Lysophospholipase (PLB) (Kluyveromyces lactis (strain ATCC 8585 / CBS 2359 / DSM 70799 / NBRC 1267 / NRRL Y-1140 / WM37) (Yeast)).